A 62-amino-acid chain; its full sequence is Calmodulin regulator protein PCP4 (62 aa).

Residues 1-39 (MSERQSAGATNGKDKTSGDNDGQKKVQEEFDIDMDAPET) are disordered. Positions 12–28 (GKDKTSGDNDGQKKVQE) are enriched in basic and acidic residues. Residues 28–40 (EEFDIDMDAPETE) are acidic; binds calcium and is required for modulating the calcium-binding kinetics of calmodulin. The IQ domain occupies 39–62 (TERAAVAIQSQFRKFQKKKAGSQS).

The protein belongs to the PCP4 family. Binds to both calcium-free and calcium-bound calmodulin. The affinity for the calcium-bound form is 50-fold greater.

Functionally, functions as a modulator of calcium-binding by calmodulin. Thereby, regulates calmodulin activity and the different processes it controls. For instance, may play a role in neuronal differentiation through activation of calmodulin-dependent kinase signaling pathways. The chain is Calmodulin regulator protein PCP4 from Mus musculus (Mouse).